Here is a 169-residue protein sequence, read N- to C-terminus: uncharacterized protein (169 aa).

The region spanning 28-157 is the Nudix hydrolase domain; sequence ELHLVIHVCI…EFIPYFFLNQ (130 aa). Positions 65 to 87 match the Nudix box motif; sequence AGSALKGETSQQAAEREVQEELG. Mg(2+) contacts are provided by glutamate 81 and glutamate 85.

The protein belongs to the Nudix hydrolase family. Requires Mg(2+) as cofactor.

This is an uncharacterized protein from Listeria monocytogenes serovar 1/2a (strain ATCC BAA-679 / EGD-e).